A 166-amino-acid chain; its full sequence is Regulatory protein RecX (166 aa).

It belongs to the RecX family.

The protein localises to the cytoplasm. In terms of biological role, modulates RecA activity. The polypeptide is Regulatory protein RecX (Salmonella choleraesuis (strain SC-B67)).